The chain runs to 313 residues: Homoserine O-acetyltransferase (313 aa).

Cys-144 functions as the Acyl-thioester intermediate in the catalytic mechanism. The substrate site is built by Lys-165 and Ser-194. The active-site Proton acceptor is the His-236. Glu-238 is a catalytic residue. Residue Arg-250 coordinates substrate.

Belongs to the MetA family.

It localises to the cytoplasm. The enzyme catalyses L-homoserine + acetyl-CoA = O-acetyl-L-homoserine + CoA. Its pathway is amino-acid biosynthesis; L-methionine biosynthesis via de novo pathway; O-acetyl-L-homoserine from L-homoserine: step 1/1. Functionally, transfers an acetyl group from acetyl-CoA to L-homoserine, forming acetyl-L-homoserine. The sequence is that of Homoserine O-acetyltransferase from Jannaschia sp. (strain CCS1).